We begin with the raw amino-acid sequence, 548 residues long: (2S)-methylsuccinyl-CoA dehydrogenase (548 aa).

Residues 282 to 291 (AVFTEPNTGS) and 315 to 317 (WIT) contribute to the FAD site. Position 291 (Ser-291) interacts with substrate. Position 409 to 412 (409 to 412 (ESAR)) interacts with substrate. FAD-binding positions include Arg-437 and 505-509 (QIHGG). Glu-532 (proton acceptor) is an active-site residue. 534 to 536 (AAE) contacts FAD.

Belongs to the acyl-CoA dehydrogenase family. In terms of assembly, homodimer. FAD serves as cofactor.

The catalysed reaction is (2S)-methylsuccinyl-CoA + oxidized [electron-transfer flavoprotein] + H(+) = 2-methylfumaryl-CoA + reduced [electron-transfer flavoprotein]. In terms of biological role, involved in the ethylmalonyl-CoA pathway, a new acetyl-CoA assimilation strategy that operates in a number of bacteria and replaces the glyoxylate cycle. Catalyzes the oxidation of (2S)-methylsuccinyl-CoA to yield mesaconyl-(C1)-CoA. Highly specific for (S)-methylsuccinyl-CoA. This Cereibacter sphaeroides (Rhodobacter sphaeroides) protein is (2S)-methylsuccinyl-CoA dehydrogenase.